We begin with the raw amino-acid sequence, 626 residues long: Nuclear RNA export factor 2 (626 aa).

Ser-34 carries the post-translational modification Phosphoserine. Positions 124 to 203 (WFKVTIPYGI…IFVNHSTAPY (80 aa)) constitute an RRM domain. LRR repeat units follow at residues 271-296 (ELLS…EKAP), 297-320 (KVKT…VKGL), 321-348 (KLEE…AIRD), and 349-376 (CFPK…ETMK). Residues 391 to 541 (LVLQFLQQYY…LCIVNDELFV (151 aa)) enclose the NTF2 domain. In terms of domain architecture, TAP-C spans 570-625 (QEQQEMVQAFSAQSGMKLEWSQKCLQDNEWNYTRAGQAFTMLQTEGKIPAEAFKQI).

It belongs to the NXF family. Interacts with NXT1, NXT2, E1B-AP5, the REF proteins and with nucleoporins, Nup62, Nup153 and Nup214. Interacts with LUZP4. Expressed almost exclusively in testis. Also expressed in several cancers.

It is found in the nucleus. It localises to the nucleoplasm. The protein resides in the cytoplasm. In terms of biological role, involved in the export of mRNA from the nucleus to the cytoplasm. The sequence is that of Nuclear RNA export factor 2 (NXF2) from Homo sapiens (Human).